The chain runs to 318 residues: Aspartate carbamoyltransferase catalytic subunit (318 aa).

Residues Arg55 and Thr56 each contribute to the carbamoyl phosphate site. Lys83 provides a ligand contact to L-aspartate. Residues Arg105, His138, and Gln141 each contribute to the carbamoyl phosphate site. Arg171 and Arg225 together coordinate L-aspartate. 2 residues coordinate carbamoyl phosphate: Gly266 and Pro267.

Belongs to the aspartate/ornithine carbamoyltransferase superfamily. ATCase family. Heterododecamer (2C3:3R2) of six catalytic PyrB chains organized as two trimers (C3), and six regulatory PyrI chains organized as three dimers (R2).

The enzyme catalyses carbamoyl phosphate + L-aspartate = N-carbamoyl-L-aspartate + phosphate + H(+). It participates in pyrimidine metabolism; UMP biosynthesis via de novo pathway; (S)-dihydroorotate from bicarbonate: step 2/3. Catalyzes the condensation of carbamoyl phosphate and aspartate to form carbamoyl aspartate and inorganic phosphate, the committed step in the de novo pyrimidine nucleotide biosynthesis pathway. The protein is Aspartate carbamoyltransferase catalytic subunit of Corynebacterium kroppenstedtii (strain DSM 44385 / JCM 11950 / CIP 105744 / CCUG 35717).